Here is a 554-residue protein sequence, read N- to C-terminus: MFS-type transporter tstD (554 aa).

Composition is skewed to polar residues over residues 1 to 10 (MPEPFNSTMP) and 27 to 38 (QDSNQPPEMSAS). Residues 1-68 (MPEPFNSTMP…ESENNEPYSV (68 aa)) are disordered. A glycan (N-linked (GlcNAc...) asparagine) is linked at asparagine 6. Residues 39 to 48 (SEKKHPENEN) show a composition bias toward basic and acidic residues. A helical membrane pass occupies residues 76–96 (LMVLAASLAGFFSPLSASIYY). 2 N-linked (GlcNAc...) asparagine glycosylation sites follow: asparagine 107 and asparagine 114. Transmembrane regions (helical) follow at residues 115-135 (LTVTTYLILQGLAPMVTASFS), 142-162 (PGYAICFIVYLAANLGLALQN), 173-193 (LQSAGSSGAIAIANGVVSDII), 202-222 (IAFASVGSILGPSLSPIIGGL), and 231-251 (WIFWFLLIFSGAFCVPFFLFF). The interval 281–300 (KEKQRQQRAENEEENANRQR) is disordered. A run of 3 helical transmembrane segments spans residues 311–331 (VFVVFTNLQTVMTLCPAGVAF), 354–374 (IKVALIFLPMGVGGLISALST), and 413–433 (IALPVFCLGCVCTVLYGWLMT). A glycan (N-linked (GlcNAc...) asparagine) is linked at asparagine 437. 3 helical membrane-spanning segments follow: residues 442–462 (IILLFVMSWSFAAFYQVLNVL), 473–493 (MVTAVVNLLRCEIGAGMAAMI), and 504–524 (WSYTIIALIGVAATSPLLLTM).

It belongs to the major facilitator superfamily.

The protein resides in the membrane. Its function is as follows. MFS-type transporter; part of the gene cluster that mediates the biosynthesis of the antihypercholesterolemic agents phomoidrides which are dimeric anhydrides. This is MFS-type transporter tstD from Talaromyces stipitatus (strain ATCC 10500 / CBS 375.48 / QM 6759 / NRRL 1006) (Penicillium stipitatum).